A 589-amino-acid polypeptide reads, in one-letter code: Sulfite reductase [NADPH] hemoprotein beta-component (589 aa).

The [4Fe-4S] cluster site is built by cysteine 443, cysteine 449, cysteine 488, and cysteine 492. Siroheme is bound at residue cysteine 492.

It belongs to the nitrite and sulfite reductase 4Fe-4S domain family. As to quaternary structure, alpha(8)-beta(8). The alpha component is a flavoprotein, the beta component is a hemoprotein. It depends on siroheme as a cofactor. The cofactor is [4Fe-4S] cluster.

The catalysed reaction is hydrogen sulfide + 3 NADP(+) + 3 H2O = sulfite + 3 NADPH + 4 H(+). The protein operates within sulfur metabolism; hydrogen sulfide biosynthesis; hydrogen sulfide from sulfite (NADPH route): step 1/1. In terms of biological role, component of the sulfite reductase complex that catalyzes the 6-electron reduction of sulfite to sulfide. This is one of several activities required for the biosynthesis of L-cysteine from sulfate. The sequence is that of Sulfite reductase [NADPH] hemoprotein beta-component from Neisseria meningitidis serogroup C (strain 053442).